A 328-amino-acid chain; its full sequence is Sin3 histone deacetylase corepressor complex component SDS3 (328 aa).

Residues 1 to 22 (MSAAGLLAPAPAPAAAPAAPEY) show a composition bias toward low complexity. Residues 1 to 69 (MSAAGLLAPA…HDEEDYVEMK (69 aa)) form a disordered region. S2 bears the N-acetylserine mark. The mediates interaction with USP17L2 stretch occupies residues 2–170 (SAAGLLAPAP…IENEKLTMEL (169 aa)). 2 stretches are compositionally biased toward acidic residues: residues 23 to 37 (YPED…EDDE) and 45 to 54 (SDEDTEDASE). Phosphoserine is present on residues S32 and S45. Position 49 is a phosphothreonine (T49). Position 53 is a phosphoserine (S53). Residues 56 to 69 (DLAKHDEEDYVEMK) show a composition bias toward basic and acidic residues. The stretch at 66 to 171 (VEMKEQMYQD…ENEKLTMELT (106 aa)) forms a coiled coil. Glycyl lysine isopeptide (Lys-Gly) (interchain with G-Cter in SUMO2) cross-links involve residues K69, K178, and K201. Residues 188 to 226 (RPNDPVPIPDKRRKPAPAQLNYLLTDEQIMEDLRTLNKL) form a sin3 interaction domain (SID) region. The tract at residues 226 to 252 (LKSPKRPASPSSPEHLPATPAESPAQR) is disordered. Residues S228, S234, and S237 each carry the phosphoserine modification. T244 carries the post-translational modification Phosphothreonine.

This sequence belongs to the SDS3 family. In terms of assembly, interacts with HCFC1. Homodimer. Component of the SIN3 histone deacetylase (HDAC) corepressor complex. Interacts with SIN3A. Interaction with SIN3B enhances the interaction between SIN3B and HDAC1 to form a complex. Component of a mSin3A corepressor complex that contains SIN3A, SAP130, SUDS3/SAP45, ARID4B/SAP180, HDAC1 and HDAC2. Interacts with USP17L2; the interaction is direct. Interacts with FOXK2. Polyubiquitinated. 'Lys-63'-polyubiquitinated SUDS3 positively regulates histone deacetylation. Regulated through deubiquitination by USP17L2/USP17 that cleaves 'Lys-63'-linked ubiquitin chains. In terms of tissue distribution, expressed in all newborn tissues tested, including brain, kidney and liver.

Its subcellular location is the nucleus. In terms of biological role, regulatory protein which represses transcription and augments histone deacetylase activity of HDAC1. May have a potential role in tumor suppressor pathways through regulation of apoptosis. May function in the assembly and/or enzymatic activity of the mSin3A corepressor complex or in mediating interactions between the complex and other regulatory complexes. The chain is Sin3 histone deacetylase corepressor complex component SDS3 (Suds3) from Mus musculus (Mouse).